The chain runs to 182 residues: uncharacterized protein (182 aa).

It localises to the plastid. The protein localises to the cyanelle. This is an uncharacterized protein from Cyanophora paradoxa.